We begin with the raw amino-acid sequence, 251 residues long: Triosephosphate isomerase (251 aa).

Substrate is bound at residue 9 to 11; sequence NWK. The Electrophile role is filled by H95. The active-site Proton acceptor is E167. Residues G173, S213, and 234-235 each bind substrate; that span reads GG. A Phosphoserine modification is found at S213.

The protein belongs to the triosephosphate isomerase family. Homodimer.

It is found in the cytoplasm. The catalysed reaction is D-glyceraldehyde 3-phosphate = dihydroxyacetone phosphate. The protein operates within carbohydrate biosynthesis; gluconeogenesis. It participates in carbohydrate degradation; glycolysis; D-glyceraldehyde 3-phosphate from glycerone phosphate: step 1/1. In terms of biological role, involved in the gluconeogenesis. Catalyzes stereospecifically the conversion of dihydroxyacetone phosphate (DHAP) to D-glyceraldehyde-3-phosphate (G3P). The polypeptide is Triosephosphate isomerase (Halalkalibacterium halodurans (strain ATCC BAA-125 / DSM 18197 / FERM 7344 / JCM 9153 / C-125) (Bacillus halodurans)).